A 950-amino-acid chain; its full sequence is ABC transporter A family member 9 (950 aa).

The next 6 membrane-spanning stretches (helical) occupy residues 31–51 (ATCLHLFSSFFFILLIFSIEE), 223–243 (IISAFYLMGPVFFLAFSMFGF), 276–296 (WLIWEGILTFVSSLFLVLFGM), 308–328 (FVLVFLLFFLFQFNMIGLAFA), 342–362 (VGFLVFLVGFITQIVTTAGFP), and 426–446 (IWLVGTFFFWFVLALYFDNII). The 246-residue stretch at 520–765 (VQIHGLAKTY…FGTGFVATVS (246 aa)) folds into the ABC transporter domain. 566-573 (GPNGAGKT) is an ATP binding site.

It belongs to the ABC transporter superfamily. ABCA family. CPR flippase (TC 3.A.1.211) subfamily. Highly expressed in siliques. Detected in seedlings, rosette leaves, stems and flowers.

Its subcellular location is the endoplasmic reticulum membrane. Functionally, mediates the transport of acyl-CoAs and/or free fatty acids to the endoplasmic reticulum. Has no effect on the selectivity of fatty acid incorporation into triacylglycerol or further desaturation steps. The polypeptide is ABC transporter A family member 9 (ABCA9) (Arabidopsis thaliana (Mouse-ear cress)).